The following is a 166-amino-acid chain: MQSFAFSTRALFLGLFAVCAGLLGFGLYLQHAVGLEPCPMCIMQRYAFVAIALTALVAGLHGPGRRGTRAYAAVILLLALAGGGVALRQTWMQLYPPEFAECGPDLEFMLGSFPLADALPMIFQGAGDCSKVDWAFLGLSIANWSLVCLTLVAVFAIMMIARKRGG.

Over 1–11 (MQSFAFSTRAL) the chain is Cytoplasmic. The helical transmembrane segment at 12–28 (FLGLFAVCAGLLGFGLY) threads the bilayer. At 29 to 46 (LQHAVGLEPCPMCIMQRY) the chain is on the periplasmic side. Cysteines 38 and 41 form a disulfide. Residues 47-63 (AFVAIALTALVAGLHGP) traverse the membrane as a helical segment. Topologically, residues 64-70 (GRRGTRA) are cytoplasmic. A helical transmembrane segment spans residues 71–87 (YAAVILLLALAGGGVAL). Topologically, residues 88–143 (RQTWMQLYPPEFAECGPDLEFMLGSFPLADALPMIFQGAGDCSKVDWAFLGLSIAN) are periplasmic. An intrachain disulfide couples C102 to C129. The chain crosses the membrane as a helical span at residues 144–162 (WSLVCLTLVAVFAIMMIAR). Topologically, residues 163–166 (KRGG) are cytoplasmic.

This sequence belongs to the DsbB family.

Its subcellular location is the cell inner membrane. In terms of biological role, required for disulfide bond formation in some periplasmic proteins. Acts by oxidizing the DsbA protein. This chain is Disulfide bond formation protein B, found in Aromatoleum aromaticum (strain DSM 19018 / LMG 30748 / EbN1) (Azoarcus sp. (strain EbN1)).